Reading from the N-terminus, the 497-residue chain is Cysteine desulfurase, mitochondrial (497 aa).

Residues 1-33 (MLKSTATRSITRLSQVYNVPAATYRACLVSRRF) constitute a mitochondrion transit peptide. Pyridoxal 5'-phosphate contacts are provided by residues 168–169 (AT), asparagine 248, glutamine 276, and 296–298 (SSH). Lysine 299 carries the N6-(pyridoxal phosphate)lysine modification. Threonine 336 contributes to the pyridoxal 5'-phosphate binding site. The active-site Cysteine persulfide intermediate is cysteine 421. Residue cysteine 421 coordinates [2Fe-2S] cluster.

It belongs to the class-V pyridoxal-phosphate-dependent aminotransferase family. NifS/IscS subfamily. Pyridoxal 5'-phosphate is required as a cofactor.

Its subcellular location is the mitochondrion. The catalysed reaction is (sulfur carrier)-H + L-cysteine = (sulfur carrier)-SH + L-alanine. In terms of biological role, catalyzes the removal of elemental sulfur from cysteine to produce alanine. It supplies the inorganic sulfur for iron-sulfur (Fe-S) clusters. Plays a role in both tRNA-processing and mitochondrial metabolism. Involved in the 2-thio-modification of both 5-carboxymethylaminomethyl-2-thiouridine in mitochondrial tRNAs and 5-methoxycarbonylmethyl-2-thiouridine (mcm5s2U) in cytoplasmic tRNAs. The protein is Cysteine desulfurase, mitochondrial of Saccharomyces cerevisiae (strain ATCC 204508 / S288c) (Baker's yeast).